A 251-amino-acid chain; its full sequence is MATAVGSGSDVEVGFAKLQGEDFEYYMQSYSIILGRNSKKSTVDVDLSSLGGGMNISRNHARIFYDFTRRRFSLEVLGKNGCFVEGVLHLPGNPNVKLDSQDLLQIGDKEFYFLLPVWSILGGPLGPRHHVLGKATVVPYHNYHSGPGSGSGKNGVRSRELYEYDDEDDDEEEDIRGSGKKTWRDGHEGVYASGEKKREGRSKADREADDQQFLQLMHGSGWSVTDIKGVWKRMASQSSKKIPITRRLGYP.

Residues 32 to 89 (IILGRNSKKSTVDVDLSSLGGGMNISRNHARIFYDFTRRRFSLEVLGKNGCFVEGVLH) enclose the FHA domain. Acidic residues predominate over residues 163 to 174 (EYDDEDDDEEED). The tract at residues 163–209 (EYDDEDDDEEEDIRGSGKKTWRDGHEGVYASGEKKREGRSKADREAD) is disordered. Positions 182–206 (TWRDGHEGVYASGEKKREGRSKADR) are enriched in basic and acidic residues.

As to expression, expressed in roots and vascular tissues near the shoot apex in young seedlings.

It is found in the nucleus. Its function is as follows. May play a role in the control of plant organ development. Does not show transactivation activity in yeast. In Arabidopsis thaliana (Mouse-ear cress), this protein is FHA domain-containing protein FHA1.